The chain runs to 735 residues: Disintegrin and metalloproteinase domain-containing protein 2 (735 aa).

The N-terminal stretch at 1 to 15 (MLCLLLLLCGLASLG) is a signal peptide. A propeptide spanning residues 16–176 (GPLKKYVENS…KIKSIKSSVR (161 aa)) is cleaved from the precursor. Topologically, residues 16 to 680 (GPLKKYVENS…EGAYHTKSRK (665 aa)) are extracellular. Asn-55, Asn-220, and Asn-288 each carry an N-linked (GlcNAc...) asparagine glycan. Residues 178–375 (HYIEMHIIVE…QVSQCLQNQP (198 aa)) enclose the Peptidase M12B domain. 4 disulfides stabilise this stretch: Cys-287–Cys-370, Cys-329–Cys-354, Cys-331–Cys-336, and Cys-442–Cys-455. A glycan (N-linked (GlcNAc...) asparagine) is linked at Asn-353. Residues 384-470 (NPVCGNNRVE…ACQEDLYVIN (87 aa)) form the Disintegrin domain. Asn-456 and Asn-564 each carry an N-linked (GlcNAc...) asparagine glycan. The region spanning 610–643 (LGYDCTPATCSDHGVCNNKRHCHCNPTYVPPNCE) is the EGF-like domain. Cystine bridges form between Cys-614/Cys-625, Cys-619/Cys-631, and Cys-633/Cys-642. The chain crosses the membrane as a helical span at residues 681–701 (WPFFLIIPFFVIFSVLVATVV). Topologically, residues 702–735 (KVYYQKKKWKTEDYANDENIESESEPKSSKVSSK) are cytoplasmic. Positions 716-735 (ANDENIESESEPKSSKVSSK) are disordered. Residue Ser-723 is modified to Phosphoserine.

Heterodimer with ADAM1/fertilin subunit alpha. The signal and the metalloprotease domain are cleaved during the epididymal maturation of the spermatozoa. In terms of tissue distribution, expressed specifically in testis.

The protein resides in the membrane. In terms of biological role, sperm surface membrane protein that may be involved in sperm-egg plasma membrane adhesion and fusion during fertilization. Could have a direct role in sperm-zona binding or migration of sperm from the uterus into the oviduct. Interactions with egg membrane could be mediated via binding between its disintegrin-like domain to one or more integrins receptors on the egg. This is a non catalytic metalloprotease-like protein. This Cavia porcellus (Guinea pig) protein is Disintegrin and metalloproteinase domain-containing protein 2 (ADAM2).